The sequence spans 169 residues: Peptide deformylase (169 aa).

The Fe cation site is built by Cys-91 and His-133. The active site involves Glu-134. His-137 contacts Fe cation.

The protein belongs to the polypeptide deformylase family. Fe(2+) serves as cofactor.

It catalyses the reaction N-terminal N-formyl-L-methionyl-[peptide] + H2O = N-terminal L-methionyl-[peptide] + formate. Its function is as follows. Removes the formyl group from the N-terminal Met of newly synthesized proteins. Requires at least a dipeptide for an efficient rate of reaction. N-terminal L-methionine is a prerequisite for activity but the enzyme has broad specificity at other positions. The polypeptide is Peptide deformylase (Hydrogenovibrio crunogenus (strain DSM 25203 / XCL-2) (Thiomicrospira crunogena)).